Here is an 89-residue protein sequence, read N- to C-terminus: Neuropeptide S (89 aa).

Residues 1–23 form the signal peptide; it reads MIGSLKLSFVLALSLSVMHVLWC. The propeptide occupies 24 to 69; it reads YPVLSSKVPGKPDYFLILLSSCPARLEGSDRLAFLKPILEKTSMKR.

It is found in the secreted. In terms of biological role, may play an important anorexigenic role. Modulates arousal and anxiety as well as increases locomotor activity. Binds to its receptor NPSR1 with nanomolar affinity to increase intracellular calcium concentrations. The polypeptide is Neuropeptide S (Nps) (Mus musculus (Mouse)).